We begin with the raw amino-acid sequence, 352 residues long: Anthranilate phosphoribosyltransferase (352 aa).

Residues glycine 82, 85–86 (GD), serine 90, 92–95 (NIST), 110–118 (KHGNRAVTG), and glycine 122 each bind 5-phospho-alpha-D-ribose 1-diphosphate. Glycine 82 is a binding site for anthranilate. Serine 94 provides a ligand contact to Mg(2+). Position 113 (asparagine 113) interacts with anthranilate. Residue arginine 168 coordinates anthranilate. Mg(2+) contacts are provided by aspartate 232 and glutamate 233.

It belongs to the anthranilate phosphoribosyltransferase family. Homodimer. It depends on Mg(2+) as a cofactor.

It carries out the reaction N-(5-phospho-beta-D-ribosyl)anthranilate + diphosphate = 5-phospho-alpha-D-ribose 1-diphosphate + anthranilate. It participates in amino-acid biosynthesis; L-tryptophan biosynthesis; L-tryptophan from chorismate: step 2/5. In terms of biological role, catalyzes the transfer of the phosphoribosyl group of 5-phosphorylribose-1-pyrophosphate (PRPP) to anthranilate to yield N-(5'-phosphoribosyl)-anthranilate (PRA). The polypeptide is Anthranilate phosphoribosyltransferase (Methanothermobacter thermautotrophicus (strain ATCC 29096 / DSM 1053 / JCM 10044 / NBRC 100330 / Delta H) (Methanobacterium thermoautotrophicum)).